The sequence spans 876 residues: Monofunctional isopimaradiene synthase, chloroplastic (876 aa).

The transit peptide at Met1–Ile64 directs the protein to the chloroplast. 5 residues coordinate Mg(2+): Asp628, Asp632, Asn772, Thr776, and Glu780. A DDXXD motif motif is present at residues Asp628–Asp632.

It belongs to the terpene synthase family. Tpsd subfamily. Requires Mg(2+) as cofactor.

It localises to the plastid. Its subcellular location is the chloroplast. The enzyme catalyses (+)-copalyl diphosphate = isopimara-7,15-diene + diphosphate. The protein operates within terpene metabolism; oleoresin biosynthesis. Its function is as follows. Involved in defensive oleoresin formation in conifers in response to insect attack or other injury. Involved in diterpene (C20) olefins biosynthesis. Monofunctional enzyme lacking the DXDD motif in the class II active site relevant for the cyclization of geranylgeranyl diphosphate (GGPP). Requires (+)-copalyl diphosphate ((+)-CPP) as substrate, but no activity with GGPP or ent-CPP. Isopimaradiene is the major products of the enzyme followed by sandaracopimaradiene. This is Monofunctional isopimaradiene synthase, chloroplastic from Pinus contorta (Shore pine).